The sequence spans 162 residues: SsrA-binding protein (162 aa).

Belongs to the SmpB family.

It localises to the cytoplasm. Required for rescue of stalled ribosomes mediated by trans-translation. Binds to transfer-messenger RNA (tmRNA), required for stable association of tmRNA with ribosomes. tmRNA and SmpB together mimic tRNA shape, replacing the anticodon stem-loop with SmpB. tmRNA is encoded by the ssrA gene; the 2 termini fold to resemble tRNA(Ala) and it encodes a 'tag peptide', a short internal open reading frame. During trans-translation Ala-aminoacylated tmRNA acts like a tRNA, entering the A-site of stalled ribosomes, displacing the stalled mRNA. The ribosome then switches to translate the ORF on the tmRNA; the nascent peptide is terminated with the 'tag peptide' encoded by the tmRNA and targeted for degradation. The ribosome is freed to recommence translation, which seems to be the essential function of trans-translation. The chain is SsrA-binding protein from Colwellia psychrerythraea (strain 34H / ATCC BAA-681) (Vibrio psychroerythus).